A 227-amino-acid polypeptide reads, in one-letter code: Thymidylate kinase (227 aa).

16-23 (GIDGAGKT) provides a ligand contact to ATP.

Belongs to the thymidylate kinase family.

The enzyme catalyses dTMP + ATP = dTDP + ADP. Functionally, phosphorylation of dTMP to form dTDP in both de novo and salvage pathways of dTTP synthesis. This is Thymidylate kinase from Xanthomonas oryzae pv. oryzae (strain MAFF 311018).